The primary structure comprises 95 residues: Protein TusB (95 aa).

Belongs to the DsrH/TusB family. Heterohexamer, formed by a dimer of trimers. The hexameric TusBCD complex contains 2 copies each of TusB, TusC and TusD. The TusBCD complex interacts with TusE.

The protein localises to the cytoplasm. Its function is as follows. Part of a sulfur-relay system required for 2-thiolation of 5-methylaminomethyl-2-thiouridine (mnm(5)s(2)U) at tRNA wobble positions. In Buchnera aphidicola subsp. Baizongia pistaciae (strain Bp), this protein is Protein TusB.